The primary structure comprises 334 residues: HTH-type transcriptional regulator RegA (334 aa).

The HTH lacI-type domain occupies 1–57 (MAASIKDVAREARVSIATVSRVLNNVDVVNEETKKKVMEAIKKLDYRPNIVARSLKT). Residues 5–24 (IKDVAREARVSIATVSRVLN) constitute a DNA-binding region (H-T-H motif).

Its function is as follows. Involved in the regulation of amylase production. The protein is HTH-type transcriptional regulator RegA (regA) of Clostridium acetobutylicum (strain ATCC 824 / DSM 792 / JCM 1419 / IAM 19013 / LMG 5710 / NBRC 13948 / NRRL B-527 / VKM B-1787 / 2291 / W).